We begin with the raw amino-acid sequence, 442 residues long: Probable carboxypeptidase PAAG_00768 (442 aa).

Positions 1 to 20 (MKLQYLVALLFVQAVPPVTA) are cleaved as a signal peptide. An N-linked (GlcNAc...) asparagine glycan is attached at asparagine 102. Aspartate 160 provides a ligand contact to Zn(2+). Glutamate 192 functions as the Proton acceptor in the catalytic mechanism. Glutamate 193 serves as a coordination point for Zn(2+). N-linked (GlcNAc...) asparagine glycosylation is present at asparagine 343.

It belongs to the peptidase M20A family. It depends on Zn(2+) as a cofactor.

It is found in the secreted. In Paracoccidioides lutzii (strain ATCC MYA-826 / Pb01) (Paracoccidioides brasiliensis), this protein is Probable carboxypeptidase PAAG_00768.